Reading from the N-terminus, the 65-residue chain is Large ribosomal subunit protein bL35c (65 aa).

Basic residues predominate over residues 25–44 (HKASKSHLLQKKSSKQRRHL). The tract at residues 25-45 (HKASKSHLLQKKSSKQRRHLS) is disordered.

It belongs to the bacterial ribosomal protein bL35 family.

The protein resides in the plastid. The protein localises to the chloroplast. The polypeptide is Large ribosomal subunit protein bL35c (Pyropia yezoensis (Susabi-nori)).